An 80-amino-acid polypeptide reads, in one-letter code: Cell division protein ZapB (80 aa).

Residues 3-80 (FEVFEKLEAK…ALLGKMEDVQ (78 aa)) are a coiled coil.

Belongs to the ZapB family. Homodimer. The ends of the coiled-coil dimer bind to each other, forming polymers. Interacts with FtsZ.

It is found in the cytoplasm. Non-essential, abundant cell division factor that is required for proper Z-ring formation. It is recruited early to the divisome by direct interaction with FtsZ, stimulating Z-ring assembly and thereby promoting cell division earlier in the cell cycle. Its recruitment to the Z-ring requires functional FtsA or ZipA. This Photorhabdus laumondii subsp. laumondii (strain DSM 15139 / CIP 105565 / TT01) (Photorhabdus luminescens subsp. laumondii) protein is Cell division protein ZapB.